The primary structure comprises 254 residues: Large ribosomal subunit protein uL2B (254 aa).

A Glycyl lysine isopeptide (Lys-Gly) (interchain with G-Cter in ubiquitin) cross-link involves residue K46. S52 carries the phosphoserine modification. K93 is covalently cross-linked (Glycyl lysine isopeptide (Lys-Gly) (interchain with G-Cter in ubiquitin)). The residue at position 95 (S95) is a Phosphoserine. Glycyl lysine isopeptide (Lys-Gly) (interchain with G-Cter in ubiquitin) cross-links involve residues K119 and K145. A phosphoserine mark is found at S159, S160, and S249.

It belongs to the universal ribosomal protein uL2 family. Component of the large ribosomal subunit (LSU). Mature yeast ribosomes consist of a small (40S) and a large (60S) subunit. The 40S small subunit contains 1 molecule of ribosomal RNA (18S rRNA) and 33 different proteins (encoded by 57 genes). The large 60S subunit contains 3 rRNA molecules (25S, 5.8S and 5S rRNA) and 46 different proteins (encoded by 81 genes).

It is found in the cytoplasm. Functionally, component of the ribosome, a large ribonucleoprotein complex responsible for the synthesis of proteins in the cell. The small ribosomal subunit (SSU) binds messenger RNAs (mRNAs) and translates the encoded message by selecting cognate aminoacyl-transfer RNA (tRNA) molecules. The large subunit (LSU) contains the ribosomal catalytic site termed the peptidyl transferase center (PTC), which catalyzes the formation of peptide bonds, thereby polymerizing the amino acids delivered by tRNAs into a polypeptide chain. The nascent polypeptides leave the ribosome through a tunnel in the LSU and interact with protein factors that function in enzymatic processing, targeting, and the membrane insertion of nascent chains at the exit of the ribosomal tunnel. This Saccharomyces cerevisiae (strain ATCC 204508 / S288c) (Baker's yeast) protein is Large ribosomal subunit protein uL2B.